Consider the following 316-residue polypeptide: 4-diphosphocytidyl-2-C-methyl-D-erythritol kinase (316 aa).

Residue lysine 32 is part of the active site. 126–136 (PVGAGLGGGSA) serves as a coordination point for ATP. Aspartate 168 is a catalytic residue.

It belongs to the GHMP kinase family. IspE subfamily.

The enzyme catalyses 4-CDP-2-C-methyl-D-erythritol + ATP = 4-CDP-2-C-methyl-D-erythritol 2-phosphate + ADP + H(+). It functions in the pathway isoprenoid biosynthesis; isopentenyl diphosphate biosynthesis via DXP pathway; isopentenyl diphosphate from 1-deoxy-D-xylulose 5-phosphate: step 3/6. Catalyzes the phosphorylation of the position 2 hydroxy group of 4-diphosphocytidyl-2C-methyl-D-erythritol. The chain is 4-diphosphocytidyl-2-C-methyl-D-erythritol kinase from Bifidobacterium longum (strain DJO10A).